A 286-amino-acid chain; its full sequence is MVCPHNNPKQGNTREMEDSIHTDFNNDMSYGDYLCLEQVLSAQHPQSEVHDEMLFIIIHQTSELWLKLAGNELDTMIHNVQQGDFSHAFKVISRVKQILNQLTQSWNILSTLTPVDYLKFRDALGRSSGFQSYGYRKIEFLLGNKNADLIQVHESNEQVHSELQGILERPSLYDEVIRVLHKQGLPIDDSALNRDFTQPYQANESVLNAWLSVYRNADEHFELYELAEKLIDIEDAFQQWRFKHMYAVQRIIGNKMGTGGSSGVSFLKKALDISFFPELFELRTHL.

Substrate is bound by residues 55–59, Tyr-117, and Arg-121; that span reads FIIIH. His-244 is a heme binding site. Thr-258 is a binding site for substrate.

Belongs to the tryptophan 2,3-dioxygenase family. In terms of assembly, homotetramer. Requires heme as cofactor.

The catalysed reaction is L-tryptophan + O2 = N-formyl-L-kynurenine. The protein operates within amino-acid degradation; L-tryptophan degradation via kynurenine pathway; L-kynurenine from L-tryptophan: step 1/2. Heme-dependent dioxygenase that catalyzes the oxidative cleavage of the L-tryptophan (L-Trp) pyrrole ring and converts L-tryptophan to N-formyl-L-kynurenine. Catalyzes the oxidative cleavage of the indole moiety. The polypeptide is Tryptophan 2,3-dioxygenase (Shewanella woodyi (strain ATCC 51908 / MS32)).